Consider the following 323-residue polypeptide: tRNA U34 carboxymethyltransferase (323 aa).

Carboxy-S-adenosyl-L-methionine-binding positions include lysine 91, tryptophan 105, lysine 110, glycine 130, 181 to 182, methionine 196, tyrosine 200, and arginine 315; that span reads IE.

It belongs to the class I-like SAM-binding methyltransferase superfamily. CmoB family. Homotetramer.

It catalyses the reaction carboxy-S-adenosyl-L-methionine + 5-hydroxyuridine(34) in tRNA = 5-carboxymethoxyuridine(34) in tRNA + S-adenosyl-L-homocysteine + H(+). In terms of biological role, catalyzes carboxymethyl transfer from carboxy-S-adenosyl-L-methionine (Cx-SAM) to 5-hydroxyuridine (ho5U) to form 5-carboxymethoxyuridine (cmo5U) at position 34 in tRNAs. The chain is tRNA U34 carboxymethyltransferase from Yersinia pseudotuberculosis serotype O:3 (strain YPIII).